Reading from the N-terminus, the 736-residue chain is Copper-exporting P-type ATPase (736 aa).

The span at 1–17 (MKHDHHQGHTHSGKGHA) shows a compositional bias: basic residues. The disordered stretch occupies residues 1–32 (MKHDHHQGHTHSGKGHACHHEHNSPKTQQASS). 6 helical membrane passes run 85–105 (FWIA…GHGL), 114–134 (SSWI…WPFF), 149–169 (FTLI…AVLW), 183–203 (VVAV…LGQV), 341–361 (GWFV…WALL), and 369–389 (YGLI…LGLA). Catalysis depends on Asp-426, which acts as the 4-aspartylphosphate intermediate. 3 residues coordinate Mg(2+): Asp-426, Thr-428, and Asp-624. A run of 2 helical transmembrane segments spans residues 682–702 (LFFA…VLYP) and 706–726 (LLLS…SVII).

This sequence belongs to the cation transport ATPase (P-type) (TC 3.A.3) family. Type IB subfamily. The cofactor is Mg(2+).

Its subcellular location is the cell inner membrane. It carries out the reaction Cu(+)(in) + ATP + H2O = Cu(+)(out) + ADP + phosphate + H(+). With respect to regulation, activated by phospholipids, Mg(2+) and Cu(+). Couples the hydrolysis of ATP with the export of copper. This is Copper-exporting P-type ATPase from Legionella pneumophila subsp. pneumophila (strain Philadelphia 1 / ATCC 33152 / DSM 7513).